We begin with the raw amino-acid sequence, 451 residues long: Bifunctional protein GlmU (451 aa).

The pyrophosphorylase stretch occupies residues 1–226 (MVAVAILAAG…YLEISGINDR (226 aa)). Residues 7–10 (LAAG), lysine 21, glutamine 73, and 78–79 (GT) contribute to the UDP-N-acetyl-alpha-D-glucosamine site. Aspartate 103 lines the Mg(2+) pocket. The UDP-N-acetyl-alpha-D-glucosamine site is built by glycine 140, glutamate 155, asparagine 170, and asparagine 224. Mg(2+) is bound at residue asparagine 224. Residues 227 to 247 (KQLATAYDILQNRIKDYWMRA) form a linker region. Residues 248–451 (GVTLIDPDSI…ISGWRMKTDD (204 aa)) are N-acetyltransferase. Residues arginine 329 and lysine 347 each contribute to the UDP-N-acetyl-alpha-D-glucosamine site. The Proton acceptor role is filled by histidine 359. Positions 362 and 373 each coordinate UDP-N-acetyl-alpha-D-glucosamine. Acetyl-CoA-binding positions include alanine 376, 382 to 383 (NY), alanine 419, and arginine 436.

It in the N-terminal section; belongs to the N-acetylglucosamine-1-phosphate uridyltransferase family. This sequence in the C-terminal section; belongs to the transferase hexapeptide repeat family. As to quaternary structure, homotrimer. Mg(2+) is required as a cofactor.

It localises to the cytoplasm. The catalysed reaction is alpha-D-glucosamine 1-phosphate + acetyl-CoA = N-acetyl-alpha-D-glucosamine 1-phosphate + CoA + H(+). The enzyme catalyses N-acetyl-alpha-D-glucosamine 1-phosphate + UTP + H(+) = UDP-N-acetyl-alpha-D-glucosamine + diphosphate. Its pathway is nucleotide-sugar biosynthesis; UDP-N-acetyl-alpha-D-glucosamine biosynthesis; N-acetyl-alpha-D-glucosamine 1-phosphate from alpha-D-glucosamine 6-phosphate (route II): step 2/2. It participates in nucleotide-sugar biosynthesis; UDP-N-acetyl-alpha-D-glucosamine biosynthesis; UDP-N-acetyl-alpha-D-glucosamine from N-acetyl-alpha-D-glucosamine 1-phosphate: step 1/1. The protein operates within bacterial outer membrane biogenesis; LPS lipid A biosynthesis. In terms of biological role, catalyzes the last two sequential reactions in the de novo biosynthetic pathway for UDP-N-acetylglucosamine (UDP-GlcNAc). The C-terminal domain catalyzes the transfer of acetyl group from acetyl coenzyme A to glucosamine-1-phosphate (GlcN-1-P) to produce N-acetylglucosamine-1-phosphate (GlcNAc-1-P), which is converted into UDP-GlcNAc by the transfer of uridine 5-monophosphate (from uridine 5-triphosphate), a reaction catalyzed by the N-terminal domain. This Gloeothece citriformis (strain PCC 7424) (Cyanothece sp. (strain PCC 7424)) protein is Bifunctional protein GlmU.